A 448-amino-acid polypeptide reads, in one-letter code: 5-hydroxytryptamine receptor 7 (448 aa).

At methionine 1–valine 86 the chain is on the extracellular side. N-linked (GlcNAc...) asparagine glycosylation is found at asparagine 5 and asparagine 69. The chain crosses the membrane as a helical span at residues isoleucine 87–phenylalanine 111. Topologically, residues valine 112–tyrosine 121 are cytoplasmic. The helical transmembrane segment at leucine 122 to valine 143 threads the bilayer. The Extracellular portion of the chain corresponds to threonine 144–histidine 155. The chain crosses the membrane as a helical span at residues phenylalanine 156–isoleucine 181. A disulfide bridge connects residues cysteine 158 and cysteine 234. Position 165 (aspartate 165) interacts with serotonin. Residues aspartate 182 to cysteine 201 lie on the Cytoplasmic side of the membrane. A helical transmembrane segment spans residues methionine 202–phenylalanine 222. Residues glycine 223–phenylalanine 240 are Extracellular-facing. A helical transmembrane segment spans residues glycine 241–tyrosine 263. The Cytoplasmic segment spans residues glutamine 264–alanine 329. A helical membrane pass occupies residues threonine 330–phenylalanine 355. At isoleucine 356–leucine 366 the chain is on the extracellular side. Residues tryptophan 367–phenylalanine 390 traverse the membrane as a helical segment. Over asparagine 391–threonine 448 the chain is Cytoplasmic. The S-palmitoyl cysteine moiety is linked to residue cysteine 404.

This sequence belongs to the G-protein coupled receptor 1 family.

It localises to the cell membrane. Functionally, G-protein coupled receptor for 5-hydroxytryptamine (serotonin), a biogenic hormone that functions as a neurotransmitter, a hormone and a mitogen. Ligand binding causes a conformation change that triggers signaling via guanine nucleotide-binding proteins (G proteins) and modulates the activity of downstream effectors. HTR7 is coupled to G(s) G alpha proteins and mediates activation of adenylate cyclase activity. The protein is 5-hydroxytryptamine receptor 7 (Htr7) of Mus musculus (Mouse).